A 516-amino-acid chain; its full sequence is H/ACA ribonucleoprotein complex subunit DKC1 (516 aa).

The segment at 1–24 is disordered; sequence MADGDGSSVKKRRKKDKRSLPDED. Residue Asp123 is the Nucleophile of the active site. The 76-residue stretch at 294-369 folds into the PUA domain; it reads HKRLVMKDSA…VVAKIKRVIM (76 aa). Residues 422-516 form a disordered region; it reads KKEAAKVPQA…KQKEVEESSE (95 aa). The segment covering 434–446 has biased composition (basic and acidic residues); sequence EVERAPKRKRESE. The span at 453–464 shows a compositional bias: pro residues; that stretch reads SPPPSPATPPPE. Residues 463–516 are a coiled coil; the sequence is PEELSKKEKKKKKKEKKAKEAAESGEEQVEVISESSAKKKKKKKKQKEVEESSE. The span at 469–478 shows a compositional bias: basic residues; that stretch reads KEKKKKKKEK.

It belongs to the pseudouridine synthase TruB family. Part of the H/ACA small nucleolar ribonucleoprotein (H/ACA snoRNP) complex, which contains NHP2/NOLA2, GAR1/NOLA1, NOP10/NOLA3, and DKC1/NOLA4, which is presumed to be the catalytic subunit. The complex contains a stable core formed by binding of one or two NOP10-DKC1 heterodimers to NHP2; GAR1 subsequently binds to this core via DKC1. The complex binds a box H/ACA small nucleolar RNA (snoRNA), which may target the specific site of modification within the RNA substrate.

It localises to the nucleus. It is found in the nucleolus. Its subcellular location is the cajal body. The enzyme catalyses uridine in 5S rRNA = pseudouridine in 5S rRNA. Catalytic subunit of H/ACA small nucleolar ribonucleoprotein (H/ACA snoRNP) complex, which catalyzes pseudouridylation of rRNA. This involves the isomerization of uridine such that the ribose is subsequently attached to C5, instead of the normal N1. Each rRNA can contain up to 100 pseudouridine ('psi') residues, which may serve to stabilize the conformation of rRNAs. Required for ribosome biogenesis and telomere maintenance. The chain is H/ACA ribonucleoprotein complex subunit DKC1 (DKC1) from Gallus gallus (Chicken).